We begin with the raw amino-acid sequence, 171 residues long: Shikimate kinase (171 aa).

13 to 18 (GVGKST) contributes to the ATP binding site. Position 17 (Ser-17) interacts with Mg(2+). Residues Asp-35, Arg-59, and Gly-81 each coordinate substrate. Position 118 (Arg-118) interacts with ATP. Residue Arg-136 coordinates substrate. ATP is bound at residue Arg-153.

This sequence belongs to the shikimate kinase family. As to quaternary structure, monomer. Mg(2+) is required as a cofactor.

The protein localises to the cytoplasm. It catalyses the reaction shikimate + ATP = 3-phosphoshikimate + ADP + H(+). Its pathway is metabolic intermediate biosynthesis; chorismate biosynthesis; chorismate from D-erythrose 4-phosphate and phosphoenolpyruvate: step 5/7. In terms of biological role, catalyzes the specific phosphorylation of the 3-hydroxyl group of shikimic acid using ATP as a cosubstrate. The polypeptide is Shikimate kinase (Streptomyces coelicolor (strain ATCC BAA-471 / A3(2) / M145)).